The chain runs to 861 residues: DNA mismatch repair protein MutS (861 aa).

618–625 (GPNMGGKS) serves as a coordination point for ATP.

It belongs to the DNA mismatch repair MutS family.

In terms of biological role, this protein is involved in the repair of mismatches in DNA. It is possible that it carries out the mismatch recognition step. This protein has a weak ATPase activity. The chain is DNA mismatch repair protein MutS from Shewanella frigidimarina (strain NCIMB 400).